The sequence spans 121 residues: Flagellar hook-basal body complex protein FliE (121 aa).

It belongs to the FliE family.

The protein localises to the bacterial flagellum basal body. This Treponema denticola (strain ATCC 35405 / DSM 14222 / CIP 103919 / JCM 8153 / KCTC 15104) protein is Flagellar hook-basal body complex protein FliE.